The primary structure comprises 446 residues: D(1A) dopamine receptor (446 aa).

Over 1-22 (MAPNTSTMDEAGLPAERDFSFR) the chain is Extracellular. Asn-4 carries an N-linked (GlcNAc...) asparagine glycan. The helical transmembrane segment at 23–48 (ILTACFLSLLILSTLLGNTLVCAAVI) threads the bilayer. Topologically, residues 49–59 (RFRHLRSKVTN) are cytoplasmic. The helical transmembrane segment at 60 to 86 (FFVISLAVSDLLVAVLVMPWKAVAEIA) threads the bilayer. Over 87–95 (GFWPLGPFC) the chain is Extracellular. Cys-95 and Cys-186 are disulfide-bonded. Residues 96–118 (NIWVAFDIMCSTASILNLCVISV) form a helical membrane-spanning segment. Over 119 to 137 (DRYWAISSPFQYERKMTPK) the chain is Cytoplasmic. A helical transmembrane segment spans residues 138-162 (AAFILISVAWTLSVLISFIPVQLSW). The Extracellular segment spans residues 163–192 (HKAKPTWPLDGNFTSLEDTEDDNCDTRLSR). Residues 193–218 (TYAISSSLISFYIPVAIMIVTYTSIY) traverse the membrane as a helical segment. Residues 219–272 (RIAQKQIRRISALERAAVHAKNCQTTAGNGNPVECAQSESSFKMSFKRETKVLK) lie on the Cytoplasmic side of the membrane. A helical transmembrane segment spans residues 273 to 299 (TLSVIMGVFVCCWLPFFISNCMVPFCG). The Extracellular segment spans residues 300 to 312 (SEETQPFCIDSIT). A helical transmembrane segment spans residues 313-337 (FDVFVWFGWANSSLNPIIYAFNADF). Topologically, residues 338-446 (QKAFSTLLGC…PVTHSGQHST (109 aa)) are cytoplasmic. S-palmitoyl cysteine attachment occurs at residues Cys-347 and Cys-351.

It belongs to the G-protein coupled receptor 1 family. Interacts with DNAJC14 via its C-terminus PubMed:11331877. Interacts with DRD2. Interacts with DORIP1. Post-translationally, N-glycosylated. As to expression, brain, in the striatum, the nucleus accumbens, and the olfactory tubercle.

It localises to the cell membrane. Its subcellular location is the endoplasmic reticulum membrane. The protein resides in the cell projection. The protein localises to the dendrite. It is found in the cilium membrane. It localises to the dendritic spine. Its function is as follows. Dopamine receptor whose activity is mediated by G proteins which activate adenylyl cyclase. The sequence is that of D(1A) dopamine receptor (Drd1) from Rattus norvegicus (Rat).